A 64-amino-acid chain; its full sequence is Putative isoleucine--tRNA ligase (64 aa).

It belongs to the class-I aminoacyl-tRNA synthetase family. As to quaternary structure, member of a complex that includes annexin.

It carries out the reaction tRNA(Ile) + L-isoleucine + ATP = L-isoleucyl-tRNA(Ile) + AMP + diphosphate. In Physarum polycephalum (Slime mold), this protein is Putative isoleucine--tRNA ligase.